Reading from the N-terminus, the 422-residue chain is 3-phosphoshikimate 1-carboxyvinyltransferase (422 aa).

3-phosphoshikimate is bound by residues K20, S21, and R25. K20 provides a ligand contact to phosphoenolpyruvate. Phosphoenolpyruvate is bound by residues G90 and R118. 3-phosphoshikimate is bound by residues S163, S164, Q165, S191, D306, and K333. Q165 lines the phosphoenolpyruvate pocket. D306 functions as the Proton acceptor in the catalytic mechanism. Phosphoenolpyruvate is bound by residues R337 and R378.

It belongs to the EPSP synthase family. In terms of assembly, monomer.

Its subcellular location is the cytoplasm. The enzyme catalyses 3-phosphoshikimate + phosphoenolpyruvate = 5-O-(1-carboxyvinyl)-3-phosphoshikimate + phosphate. It participates in metabolic intermediate biosynthesis; chorismate biosynthesis. Its function is as follows. Catalyzes the transfer of the enolpyruvyl moiety of phosphoenolpyruvate (PEP) to the 5-hydroxyl of shikimate-3-phosphate (S3P) to produce enolpyruvyl shikimate-3-phosphate and inorganic phosphate. The sequence is that of 3-phosphoshikimate 1-carboxyvinyltransferase from Methanocella arvoryzae (strain DSM 22066 / NBRC 105507 / MRE50).